The following is a 990-amino-acid chain: Protein SUPPRESSOR OF MAX2 1 (990 aa).

The 160-residue stretch at 8–167 (IQQTLTPEAA…KATIEQSLNN (160 aa)) folds into the Clp R domain. Repeat stretches follow at residues 12–83 (LTPE…LERL) and 96–167 (ISNA…SLNN). Residues 818–855 (PKKEHGSGLSFDLNQAADTDDGSHNTSDLTTDNDQDEQ) are disordered. An EAR motif is present at residues 828-832 (FDLNQ).

It belongs to the ClpA/ClpB family. As to quaternary structure, interacts probably with TPL/TPR in an EAR-motif dependent manner. Interacts with TPL, TPR1, TPR2 and TPR4. Highly expressed in dry seeds. Expressed in seedlings, rosette leaves and senescing leaves. Detected in roots and axillary shoots. Expressed in the primary rosette buds and expanding leaves of adult rosettes, the vasculature of the hypocotyls, cotyledons, and mature roots, in the midvein and petioles of young leaves, the young leaf periphery, stomata, and the root caps.

Functionally, probable component of a transcriptional corepressor complex that acts downstream of MAX2 to negatively regulate karrikins/strigolactone responses. Probable target of MAX2 during germination and seedling photomorphogenesis. Acts probably specifically in the karrikin pathway. The sequence is that of Protein SUPPRESSOR OF MAX2 1 from Arabidopsis thaliana (Mouse-ear cress).